Here is a 164-residue protein sequence, read N- to C-terminus: Putative Cys-tRNA(Pro)/Cys-tRNA(Cys) deacylase EbsC (164 aa).

This sequence belongs to the prolyl-tRNA editing family. YbaK/EbsC subfamily.

Functionally, affects the expression of the receptor, named binding substance, that mediates mating aggregate formation. Could be a regulatory protein that suppresses the function or expression of ebsA and/or ebsMB. In Enterococcus faecalis (strain ATCC 700802 / V583), this protein is Putative Cys-tRNA(Pro)/Cys-tRNA(Cys) deacylase EbsC.